A 370-amino-acid chain; its full sequence is tRNA-specific 2-thiouridylase MnmA (370 aa).

ATP contacts are provided by residues 7-14 (GISGGVDS) and M33. The interval 104–106 (NPD) is interaction with target base in tRNA. C109 (nucleophile) is an active-site residue. C109 and C208 are oxidised to a cystine. An ATP-binding site is contributed by G134. The segment at 158–160 (KDQ) is interaction with tRNA. Residue C208 is the Cysteine persulfide intermediate of the active site.

Belongs to the MnmA/TRMU family.

The protein localises to the cytoplasm. The enzyme catalyses S-sulfanyl-L-cysteinyl-[protein] + uridine(34) in tRNA + AH2 + ATP = 2-thiouridine(34) in tRNA + L-cysteinyl-[protein] + A + AMP + diphosphate + H(+). Functionally, catalyzes the 2-thiolation of uridine at the wobble position (U34) of tRNA, leading to the formation of s(2)U34. In Malacoplasma penetrans (strain HF-2) (Mycoplasma penetrans), this protein is tRNA-specific 2-thiouridylase MnmA.